The chain runs to 305 residues: MIFNRSVTYSNARLPYSKRSLYTKTRVLFFLKQKILSRVTTKMAIADLDKQPDSVSSVLKVFGILQALGEEREIGITELSQRVMMSKSTVYRFLQTMKSLGYVAQEGESEKYSLTLKLFELGAKALQNVDLIRSADIQMRELSALTRETIHLGALDEDSIVYIHKIDSMYNLRMYSRIGRRNPLHSTAIGKVLLAWRDREEVKEILSQVEFKRTTVHTIGSTEELLPQLDLVRQQGYGEDNEEQEEGLRCIAVPVFDRFGVVIAGLSISFPTIRFSEDNKHEYVAMLHTAARNISDQMGYHDYPF.

In terms of domain architecture, HTH iclR-type spans 55 to 116 (VSSVLKVFGI…GESEKYSLTL (62 aa)). The H-T-H motif DNA-binding region spans 76–95 (ITELSQRVMMSKSTVYRFLQ). Residues 131-300 (LIRSADIQMR…ARNISDQMGY (170 aa)) enclose the IclR-ED domain.

In terms of assembly, homodimer.

The protein localises to the cytoplasm. Functionally, transcriptional repressor that negatively regulates the expression of genes involved in pectinolysis and in pectinase secretion. Controls genes involved in pectin catabolism, including the pectinase genes (pelA, pelB, pelC, pelE), genes involved in pectin catabolism (kdgT, ogl, kduI-kdgF) and the outT gene involved in pectinase secretion. Acts by binding directly to KdgR binding sites (KdgR-box) in the gene operator/promoter region. The protein is HTH-type transcriptional regulator KdgR of Dickeya chrysanthemi (Pectobacterium chrysanthemi).